The following is an 880-amino-acid chain: Protein translocase subunit SecA (880 aa).

ATP-binding positions include glutamine 86, 104–108 (GEGKT), and aspartate 511. Residues 837–871 (AQKIQRSDGDGARRPVEKPKKIGRNDPCPCGSGKK) form a disordered region. Basic and acidic residues predominate over residues 841-860 (QRSDGDGARRPVEKPKKIGR). Residues cysteine 864, cysteine 866, cysteine 875, and cysteine 876 each coordinate Zn(2+).

The protein belongs to the SecA family. Monomer and homodimer. Part of the essential Sec protein translocation apparatus which comprises SecA, SecYEG and auxiliary proteins SecDF. Other proteins may also be involved. Requires Zn(2+) as cofactor.

Its subcellular location is the cell inner membrane. It is found in the cytoplasm. The catalysed reaction is ATP + H2O + cellular proteinSide 1 = ADP + phosphate + cellular proteinSide 2.. Part of the Sec protein translocase complex. Interacts with the SecYEG preprotein conducting channel. Has a central role in coupling the hydrolysis of ATP to the transfer of proteins into and across the cell membrane, serving as an ATP-driven molecular motor driving the stepwise translocation of polypeptide chains across the membrane. In Thermodesulfovibrio yellowstonii (strain ATCC 51303 / DSM 11347 / YP87), this protein is Protein translocase subunit SecA.